The following is a 146-amino-acid chain: Hemoglobin subunit beta (146 aa).

An N-acetylvaline modification is found at Val1. A Globin domain is found at 2-146 (HLTPEEKALV…VANALAHKYH (145 aa)). At Lys59 the chain carries N6-acetyllysine. A heme b-binding site is contributed by His63. Lys82 is subject to N6-acetyllysine. Heme b is bound at residue His92. The residue at position 93 (Cys93) is an S-nitrosocysteine. Residue Lys144 is modified to N6-acetyllysine.

The protein belongs to the globin family. As to quaternary structure, heterotetramer of two alpha chains and two beta chains. Red blood cells.

In terms of biological role, involved in oxygen transport from the lung to the various peripheral tissues. This Trichechus inunguis (Amazon manatee) protein is Hemoglobin subunit beta (HBB).